We begin with the raw amino-acid sequence, 537 residues long: 2-isopropylmalate synthase (537 aa).

The Pyruvate carboxyltransferase domain maps to 8–269 (VLIFDTTLRD…YFNGYLGRAE (262 aa)). Residues D17, H208, H210, and N244 each contribute to the Mn(2+) site. The tract at residues 408–537 (QLAGVQVSCG…QRAPLPAPAL (130 aa)) is regulatory domain.

The protein belongs to the alpha-IPM synthase/homocitrate synthase family. LeuA type 1 subfamily. As to quaternary structure, homodimer. It depends on Mn(2+) as a cofactor.

The protein resides in the cytoplasm. It carries out the reaction 3-methyl-2-oxobutanoate + acetyl-CoA + H2O = (2S)-2-isopropylmalate + CoA + H(+). It participates in amino-acid biosynthesis; L-leucine biosynthesis; L-leucine from 3-methyl-2-oxobutanoate: step 1/4. Catalyzes the condensation of the acetyl group of acetyl-CoA with 3-methyl-2-oxobutanoate (2-ketoisovalerate) to form 3-carboxy-3-hydroxy-4-methylpentanoate (2-isopropylmalate). This chain is 2-isopropylmalate synthase, found in Synechococcus sp. (strain RCC307).